Here is a 469-residue protein sequence, read N- to C-terminus: Threonine synthase (469 aa).

The residue at position 112 (lysine 112) is an N6-(pyridoxal phosphate)lysine.

The protein belongs to the threonine synthase family. The cofactor is pyridoxal 5'-phosphate.

The catalysed reaction is O-phospho-L-homoserine + H2O = L-threonine + phosphate. Its pathway is amino-acid biosynthesis; L-threonine biosynthesis; L-threonine from L-aspartate: step 5/5. In terms of biological role, catalyzes the gamma-elimination of phosphate from L-phosphohomoserine and the beta-addition of water to produce L-threonine. In Pseudomonas aeruginosa (strain ATCC 15692 / DSM 22644 / CIP 104116 / JCM 14847 / LMG 12228 / 1C / PRS 101 / PAO1), this protein is Threonine synthase (thrC).